The primary structure comprises 158 residues: Transcription elongation factor GreA (158 aa).

Residues 47 to 68 (AEYDAAKEAQGLLEMRIAKLEE) adopt a coiled-coil conformation.

This sequence belongs to the GreA/GreB family.

Functionally, necessary for efficient RNA polymerase transcription elongation past template-encoded arresting sites. The arresting sites in DNA have the property of trapping a certain fraction of elongating RNA polymerases that pass through, resulting in locked ternary complexes. Cleavage of the nascent transcript by cleavage factors such as GreA or GreB allows the resumption of elongation from the new 3'terminus. GreA releases sequences of 2 to 3 nucleotides. In Flavobacterium johnsoniae (strain ATCC 17061 / DSM 2064 / JCM 8514 / BCRC 14874 / CCUG 350202 / NBRC 14942 / NCIMB 11054 / UW101) (Cytophaga johnsonae), this protein is Transcription elongation factor GreA.